Reading from the N-terminus, the 364-residue chain is Mannose-1-phosphate guanyltransferase (364 aa).

The protein belongs to the transferase hexapeptide repeat family.

The protein resides in the cytoplasm. It carries out the reaction alpha-D-mannose 1-phosphate + GTP + H(+) = GDP-alpha-D-mannose + diphosphate. The protein operates within nucleotide-sugar biosynthesis; GDP-alpha-D-mannose biosynthesis; GDP-alpha-D-mannose from alpha-D-mannose 1-phosphate (GTP route): step 1/1. Involved in cell wall synthesis where it is required for glycosylation. Involved in cell cycle progression through cell-size checkpoint. This chain is Mannose-1-phosphate guanyltransferase (MPG1), found in Gibberella zeae (strain ATCC MYA-4620 / CBS 123657 / FGSC 9075 / NRRL 31084 / PH-1) (Wheat head blight fungus).